The sequence spans 190 residues: Subtilisin inhibitor CLSI-II (190 aa).

2 cysteine pairs are disulfide-bonded: cysteine 44-cysteine 88 and cysteine 142-cysteine 149.

This sequence belongs to the protease inhibitor I3 (leguminous Kunitz-type inhibitor) family. Forms active dimers on storage in aqueous solution, possibly through formation of an intermolecular disulfide bond. The N-terminal Asn is removed in about 50% of both the CLSI-II and CLSI-III chains.

Its subcellular location is the secreted. Its function is as follows. Inhibits subtilisin-type microbial serine proteases incuding proteinase K, subtilisin BPN', subtilisin Carlsberg and subtilisin E in a non-stoichiometric manner. Weakly inhibits A.oryzae protease and some metalloproteases including pronase E. Does not inhibit trypsin, chymotrypsin, S.griseus alkaline protease or A.lyticus lysyl endopeptidase. CLSI-II has a wider inhibitory specificity than CLSI-III. The polypeptide is Subtilisin inhibitor CLSI-II (Canavalia lineata (Beach bean)).